The chain runs to 378 residues: Atypical chemokine receptor 2 (378 aa).

The Extracellular segment spans residues Met-1–Pro-49. N-linked (GlcNAc...) asparagine glycosylation is present at Asn-17. Residues Val-50–Leu-70 form a helical membrane-spanning segment. At Leu-71–Asn-91 the chain is on the cytoplasmic side. The helical transmembrane segment at Leu-92–Gly-112 threads the bilayer. The Extracellular segment spans residues Ser-113–Lys-117. Cys-116 and Cys-194 are joined by a disulfide. A helical membrane pass occupies residues Val-118–Leu-139. Residues Asp-140 to Leu-161 are Cytoplasmic-facing. Residues Leu-162 to Val-182 traverse the membrane as a helical segment. Residues Gln-183–Leu-216 are Extracellular-facing. A helical membrane pass occupies residues Gly-217–Val-237. The Cytoplasmic portion of the chain corresponds to Arg-238–Arg-249. The helical transmembrane segment at Met-250–Phe-270 threads the bilayer. Over Leu-271–Thr-292 the chain is Extracellular. The chain crosses the membrane as a helical span at residues Leu-293 to Phe-313. Residues Cys-314–Thr-378 are Cytoplasmic-facing. Residues Leu-326–Thr-378 are C-terminal cytoplasmic tail.

The protein belongs to the G-protein coupled receptor 1 family. Atypical chemokine receptor subfamily. Phosphorylated on serine residues in the C-terminal cytoplasmic tail. As to expression, expressed on apoptotic neutrophils (at protein level).

It localises to the early endosome. The protein localises to the recycling endosome. It is found in the cell membrane. Functionally, atypical chemokine receptor that controls chemokine levels and localization via high-affinity chemokine binding that is uncoupled from classic ligand-driven signal transduction cascades, resulting instead in chemokine sequestration, degradation, or transcytosis. Also known as interceptor (internalizing receptor) or chemokine-scavenging receptor or chemokine decoy receptor. Acts as a receptor for chemokines including CCL2, CCL3, CCL3L1, CCL4, CCL5, CCL7, CCL8, CCL11, CCL13, CCL17, CCL22, CCL23, CCL24, SCYA2/MCP-1, SCY3/MIP-1-alpha, SCYA5/RANTES and SCYA7/MCP-3. Upon active ligand stimulation, activates a beta-arrestin 1 (ARRB1)-dependent, G protein-independent signaling pathway that results in the phosphorylation of the actin-binding protein cofilin (CFL1) through a RAC1-PAK1-LIMK1 signaling pathway. Activation of this pathway results in up-regulation of ACKR2 from endosomal compartment to cell membrane, increasing its efficiency in chemokine uptake and degradation. By scavenging chemokines in tissues, on the surfaces of lymphatic vessels, and in placenta, plays an essential role in the resolution (termination) of the inflammatory response and in the regulation of adaptive immune responses. Plays a major role in the immune silencing of macrophages during the resolution of inflammation. Acts as a regulator of inflammatory leukocyte interactions with lymphatic endothelial cells (LECs) and is required for immature/mature dendritic cells discrimination by LECs. The polypeptide is Atypical chemokine receptor 2 (Ackr2) (Mus musculus (Mouse)).